A 366-amino-acid polypeptide reads, in one-letter code: IgG receptor FcRn large subunit p51 (366 aa).

The signal sequence occupies residues 1–22 (MGMSQPGVLLSLLLVLLPQTWG). The segment at 23–111 (AEPRLPLMYH…RTLENQINGT (89 aa)) is alpha-1. Topologically, residues 23–298 (AEPRLPLMYH…VDLDSPARSS (276 aa)) are extracellular. N-linked (GlcNAc...) asparagine glycosylation is found at Asn-109, Asn-126, Asn-150, and Asn-247. The segment at 112-201 (FTLQGLLGCE…ERGRQNLEWK (90 aa)) is alpha-2. Cystine bridges form between Cys-120/Cys-183 and Cys-222/Cys-276. The tract at residues 202–291 (EPPSMRLKAR…GLAQPLTVDL (90 aa)) is alpha-3. The 88-residue stretch at 203-290 (PPSMRLKARP…EGLAQPLTVD (88 aa)) folds into the Ig-like C1-type domain. Positions 293–298 (SPARSS) are connecting peptide. Residues 299 to 322 (VPVVGIILGLLLVVVAIAGGVLLW) form a helical membrane-spanning segment. The Cytoplasmic segment spans residues 323–366 (NRMRSGLPAPWLSLSGDDSGDLLPGGNLPPEAEPQGVNAFPATS). The residue at position 335 (Ser-335) is a Phosphoserine. The interval 344–366 (LLPGGNLPPEAEPQGVNAFPATS) is disordered.

The protein belongs to the immunoglobulin superfamily. FcRn complex consists of two subunits: p51, and p14 which is equivalent to beta-2-microglobulin. It forms an MHC class I-like heterodimer. Interacts with albumin/ALB; this interaction regulates ALB homeostasis. Intestinal epithelium.

The protein localises to the cell membrane. Its subcellular location is the endosome membrane. In terms of biological role, cell surface receptor that transfers passive humoral immunity from the mother to the newborn. Binds to the Fc region of monomeric immunoglobulin gamma and mediates its selective uptake from milk. IgG in the milk is bound at the apical surface of the intestinal epithelium. The resultant FcRn-IgG complexes are transcytosed across the intestinal epithelium and IgG is released from FcRn into blood or tissue fluids. Throughout life, contributes to effective humoral immunity by recycling IgG and extending its half-life in the circulation. Mechanistically, monomeric IgG binding to FcRn in acidic endosomes of endothelial and hematopoietic cells recycles IgG to the cell surface where it is released into the circulation. In addition of IgG, regulates homeostasis of the other most abundant circulating protein albumin/ALB. This is IgG receptor FcRn large subunit p51 (Fcgrt) from Rattus norvegicus (Rat).